A 122-amino-acid chain; its full sequence is Ribosome-binding factor A (122 aa).

This sequence belongs to the RbfA family. As to quaternary structure, monomer. Binds 30S ribosomal subunits, but not 50S ribosomal subunits or 70S ribosomes.

Its subcellular location is the cytoplasm. Functionally, one of several proteins that assist in the late maturation steps of the functional core of the 30S ribosomal subunit. Associates with free 30S ribosomal subunits (but not with 30S subunits that are part of 70S ribosomes or polysomes). Required for efficient processing of 16S rRNA. May interact with the 5'-terminal helix region of 16S rRNA. This Anaeromyxobacter sp. (strain Fw109-5) protein is Ribosome-binding factor A.